Consider the following 283-residue polypeptide: Extracellular metalloprotease MGG_08041 (283 aa).

Positions 1-22 (MQINVVKTFLFALAASSVSALA) are cleaved as a signal peptide. Residue Asn55 is glycosylated (N-linked (GlcNAc...) asparagine). Position 197 (His197) interacts with Zn(2+). Residue Glu198 is part of the active site. Residue His201 participates in Zn(2+) binding. A disulfide bridge connects residues Cys233 and Cys260.

Belongs to the peptidase M43B family.

It localises to the secreted. Functionally, secreted metalloproteinase that allows assimilation of proteinaceous substrates. The chain is Extracellular metalloprotease MGG_08041 from Pyricularia oryzae (strain 70-15 / ATCC MYA-4617 / FGSC 8958) (Rice blast fungus).